Reading from the N-terminus, the 458-residue chain is MGKEKTHVNVVVIGHVDSGKSTTTGHLIYKCGGIDKRTIEKFEKEAAELGKGSFKYAWVLDKLKAERERGITIDIALWKFETPKYHVTVIDAPGHRDFIKNMITGTSQADCGILIIAAGTGEFEAGISKDGQTREHALLAFTLGVRQLIVAINKMDSTKWSEQRFNEIIKEVSGFIKKIGFNPKSVPFVPISGWHGDNMLEESTNMPWYKGWNKETKAGAKSGKTLLDAIDAIDPPQRPSDKPLRLPLQDVYKIGGIGTVPVGRVETGVIKAGMVVTFAPANVTTEVKSVEMHHEQLVEGLPGDNVGFNVKNVSVKDIRRGNVCSDSKNDPAKEAGSFTAQVIVLNHPGQIGAGYAPVLDCHTAHIACKFAELLEKIDRRSGKKLEDAPKFVKSGDSAIVKMIPSKPMCVEAYTDYPPLGRFAVRDMRQTVAVGVIKAVEKVDKAGKVTKAAAKAGEK.

Gly2 is modified (n,N,N-trimethylglycine). Lys3 carries the N6,N6-dimethyllysine; alternate modification. Lys3 carries the post-translational modification N6-methyllysine; alternate. The tr-type G domain maps to 5 to 240; that stretch reads KTHVNVVVIG…DAIDPPQRPS (236 aa). Positions 14 to 21 are G1; sequence GHVDSGKS. 14-21 contributes to the GTP binding site; sequence GHVDSGKS. Lys30 carries the N6-methyllysine modification. Residues 70–74 are G2; it reads GITID. Lys79 carries the N6,N6,N6-trimethyllysine modification. Residues 91–94 form a G3 region; the sequence is DAPG. GTP contacts are provided by residues 91-95 and 153-156; these read DAPGH and NKMD. Positions 153–156 are G4; sequence NKMD. Positions 192–194 are G5; the sequence is SGW. An N6,N6-dimethyllysine; alternate modification is found at Lys316. The residue at position 316 (Lys316) is an N6-methyllysine; alternate. N6-methyllysine is present on Lys390.

The protein belongs to the TRAFAC class translation factor GTPase superfamily. Classic translation factor GTPase family. EF-Tu/EF-1A subfamily.

It localises to the cytoplasm. Functionally, this protein promotes the GTP-dependent binding of aminoacyl-tRNA to the A-site of ribosomes during protein biosynthesis. The polypeptide is Elongation factor 1-alpha (TEF-1) (Absidia glauca (Pin mould)).